The following is a 223-amino-acid chain: GTP cyclohydrolase 1 (223 aa).

Zn(2+)-binding residues include Cys114, His117, and Cys185.

Belongs to the GTP cyclohydrolase I family. As to quaternary structure, homomer.

It catalyses the reaction GTP + H2O = 7,8-dihydroneopterin 3'-triphosphate + formate + H(+). Its pathway is cofactor biosynthesis; 7,8-dihydroneopterin triphosphate biosynthesis; 7,8-dihydroneopterin triphosphate from GTP: step 1/1. This chain is GTP cyclohydrolase 1, found in Chlorobium chlorochromatii (strain CaD3).